We begin with the raw amino-acid sequence, 356 residues long: Holliday junction branch migration complex subunit RuvB (356 aa).

The large ATPase domain (RuvB-L) stretch occupies residues 13-197 (LPPARRMLSA…FGIVARLEFY (185 aa)). ATP is bound by residues leucine 36, arginine 37, glycine 78, lysine 81, threonine 82, threonine 83, 144 to 146 (EDY), arginine 187, tyrosine 197, and arginine 234. Threonine 82 lines the Mg(2+) pocket. The tract at residues 198 to 268 (TPEELARIVK…IANRALAMLD (71 aa)) is small ATPAse domain (RuvB-S). The tract at residues 271–356 (PQGFDLMDRK…RGNAENLFEE (86 aa)) is head domain (RuvB-H). Arginine 326 and arginine 331 together coordinate DNA.

It belongs to the RuvB family. In terms of assembly, homohexamer. Forms an RuvA(8)-RuvB(12)-Holliday junction (HJ) complex. HJ DNA is sandwiched between 2 RuvA tetramers; dsDNA enters through RuvA and exits via RuvB. An RuvB hexamer assembles on each DNA strand where it exits the tetramer. Each RuvB hexamer is contacted by two RuvA subunits (via domain III) on 2 adjacent RuvB subunits; this complex drives branch migration. In the full resolvosome a probable DNA-RuvA(4)-RuvB(12)-RuvC(2) complex forms which resolves the HJ.

The protein resides in the cytoplasm. It carries out the reaction ATP + H2O = ADP + phosphate + H(+). In terms of biological role, the RuvA-RuvB-RuvC complex processes Holliday junction (HJ) DNA during genetic recombination and DNA repair, while the RuvA-RuvB complex plays an important role in the rescue of blocked DNA replication forks via replication fork reversal (RFR). RuvA specifically binds to HJ cruciform DNA, conferring on it an open structure. The RuvB hexamer acts as an ATP-dependent pump, pulling dsDNA into and through the RuvAB complex. RuvB forms 2 homohexamers on either side of HJ DNA bound by 1 or 2 RuvA tetramers; 4 subunits per hexamer contact DNA at a time. Coordinated motions by a converter formed by DNA-disengaged RuvB subunits stimulates ATP hydrolysis and nucleotide exchange. Immobilization of the converter enables RuvB to convert the ATP-contained energy into a lever motion, pulling 2 nucleotides of DNA out of the RuvA tetramer per ATP hydrolyzed, thus driving DNA branch migration. The RuvB motors rotate together with the DNA substrate, which together with the progressing nucleotide cycle form the mechanistic basis for DNA recombination by continuous HJ branch migration. Branch migration allows RuvC to scan DNA until it finds its consensus sequence, where it cleaves and resolves cruciform DNA. The polypeptide is Holliday junction branch migration complex subunit RuvB (Polaromonas naphthalenivorans (strain CJ2)).